A 78-amino-acid chain; its full sequence is UPF0154 protein lp_2061 (78 aa).

A helical transmembrane segment spans residues 5-27 (TGIWILIVVIGVLVGLTGGFFGA).

This sequence belongs to the UPF0154 family.

It localises to the membrane. This is UPF0154 protein lp_2061 from Lactiplantibacillus plantarum (strain ATCC BAA-793 / NCIMB 8826 / WCFS1) (Lactobacillus plantarum).